The chain runs to 211 residues: Endonuclease III (211 aa).

One can recognise a HhH domain in the interval 111-130 (AHALESLPGVGHKTANVVLN). Positions 190, 197, 200, and 206 each coordinate [4Fe-4S] cluster.

Belongs to the Nth/MutY family. It depends on [4Fe-4S] cluster as a cofactor.

It carries out the reaction 2'-deoxyribonucleotide-(2'-deoxyribose 5'-phosphate)-2'-deoxyribonucleotide-DNA = a 3'-end 2'-deoxyribonucleotide-(2,3-dehydro-2,3-deoxyribose 5'-phosphate)-DNA + a 5'-end 5'-phospho-2'-deoxyribonucleoside-DNA + H(+). Functionally, DNA repair enzyme that has both DNA N-glycosylase activity and AP-lyase activity. The DNA N-glycosylase activity releases various damaged pyrimidines from DNA by cleaving the N-glycosidic bond, leaving an AP (apurinic/apyrimidinic) site. The AP-lyase activity cleaves the phosphodiester bond 3' to the AP site by a beta-elimination, leaving a 3'-terminal unsaturated sugar and a product with a terminal 5'-phosphate. This is Endonuclease III from Treponema pallidum (strain Nichols).